We begin with the raw amino-acid sequence, 652 residues long: Phosphatidylinositol-binding clathrin assembly protein (652 aa).

S2 carries the N-acetylserine modification. An ENTH domain is found at 14–145 (QHSVTGSAVS…VSYRQVAFDF (132 aa)). Phosphoserine is present on residues S16 and S20. The interval 221 to 294 (KYFDMKKNQC…LEGKKIKDST (74 aa)) is interaction with PIMREG. K238 participates in a covalent cross-link: Glycyl lysine isopeptide (Lys-Gly) (interchain with G-Cter in SUMO2). Phosphoserine is present on residues S303 and S315. The tract at residues 559-580 (KNDVNWSQPGEKKLTGGSNWQP) is disordered.

This sequence belongs to the PICALM/SNAP91 family. Binds to clathrin; involves primarily the C-terminal sequences, but the full-length protein is required for full binding capacity. Binds phosphatidylinositol 4,5- bisphosphate. Interacts with PIMREG; this interaction may change the subcellular location into the nucleus. Interacts with AP2A1 (via its alpha-appendage domain). Interacts (via N-terminus) with VAMP2; VAMP3; VAMP7 and VAMP8 (Via N-terminus). Interacts with LC3/MAP1LC3A. In terms of tissue distribution, expressed in all tissues examined.

Its subcellular location is the cell membrane. It is found in the membrane. The protein localises to the clathrin-coated pit. The protein resides in the golgi apparatus. It localises to the cytoplasmic vesicle. Its subcellular location is the clathrin-coated vesicle. It is found in the nucleus. Functionally, cytoplasmic adapter protein that plays a critical role in clathrin-mediated endocytosis which is important in processes such as internalization of cell receptors, synaptic transmission or removal of apoptotic cells. Recruits AP-2 and attaches clathrin triskelions to the cytoplasmic side of plasma membrane leading to clathrin-coated vesicles (CCVs) assembly. Furthermore, regulates clathrin-coated vesicle size and maturation by directly sensing and driving membrane curvature. In addition to binding to clathrin, mediates the endocytosis of small R-SNARES (Soluble NSF Attachment Protein REceptors) between plasma membranes and endosomes including VAMP2, VAMP3, VAMP4, VAMP7 or VAMP8. In turn, PICALM-dependent SNARE endocytosis is required for the formation and maturation of autophagic precursors. Modulates thereby autophagy and the turnover of autophagy substrates such as MAPT/TAU or amyloid precursor protein cleaved C-terminal fragment (APP-CTF). This chain is Phosphatidylinositol-binding clathrin assembly protein (PICALM), found in Homo sapiens (Human).